We begin with the raw amino-acid sequence, 1056 residues long: Isoleucine--tRNA ligase (1056 aa).

Residues 1-13 (MCDQGEVSSQNSS) are compositionally biased toward polar residues. Residues 1–26 (MCDQGEVSSQNSSDYKEQRPTPRPNL) are disordered. Positions 63 to 73 (PFANGLPHFGH) match the 'HIGH' region motif. The 'KMSKS' region motif lies at 632 to 636 (KASKS). ATP is bound at residue Lys-635.

It belongs to the class-I aminoacyl-tRNA synthetase family. IleS type 2 subfamily. In terms of assembly, monomer. Requires Zn(2+) as cofactor.

It is found in the cytoplasm. It carries out the reaction tRNA(Ile) + L-isoleucine + ATP = L-isoleucyl-tRNA(Ile) + AMP + diphosphate. Functionally, catalyzes the attachment of isoleucine to tRNA(Ile). As IleRS can inadvertently accommodate and process structurally similar amino acids such as valine, to avoid such errors it has two additional distinct tRNA(Ile)-dependent editing activities. One activity is designated as 'pretransfer' editing and involves the hydrolysis of activated Val-AMP. The other activity is designated 'posttransfer' editing and involves deacylation of mischarged Val-tRNA(Ile). In Tropheryma whipplei (strain TW08/27) (Whipple's bacillus), this protein is Isoleucine--tRNA ligase.